The chain runs to 818 residues: Structure-specific endonuclease subunit SLX4 (818 aa).

Disordered regions lie at residues 1-39, 53-151, 279-324, 413-437, and 587-712; these read MSFL…PSAS, RDPY…SSSN, FSEG…HQDS, NAQF…KTSK, and MLPA…MASE. Residues 28–39 are compositionally biased toward low complexity; sequence VIDSSPSVPSAS. Positions 90-103 are enriched in basic and acidic residues; the sequence is PSERTKDAHGKDRF. The span at 306–316 shows a compositional bias: low complexity; sequence TTSTTITSLST. Over residues 426-437 the composition is skewed to polar residues; that stretch reads TRSPCSNPKTSK. The span at 604–618 shows a compositional bias: basic and acidic residues; the sequence is QMSKRDTIKSRDIRA. 3 stretches are compositionally biased toward polar residues: residues 621–640, 652–672, and 696–712; these read SRSN…QNTG, SSKS…TQSV, and SLAS…MASE.

It belongs to the SLX4 family. As to quaternary structure, forms a heterodimer with SLX1. Post-translationally, phosphorylated in response to DNA damage.

It is found in the nucleus. Functionally, regulatory subunit of the SLX1-SLX4 structure-specific endonuclease that resolves DNA secondary structures generated during DNA repair and recombination. Has endonuclease activity towards branched DNA substrates, introducing single-strand cuts in duplex DNA close to junctions with ss-DNA. The chain is Structure-specific endonuclease subunit SLX4 from Uncinocarpus reesii (strain UAMH 1704).